The sequence spans 712 residues: Polyribonucleotide nucleotidyltransferase (712 aa).

Residues Asp-487 and Asp-493 each contribute to the Mg(2+) site. Positions 554 to 613 (PRIEVMNIPVDKIREVIGSGGKVIREIVEKTGAKINIEDDGTVKIASSSGKEIEAARKWI) constitute a KH domain. The 69-residue stretch at 623 to 691 (GQVYEGTVVK…ERGKVRLSMK (69 aa)) folds into the S1 motif domain.

This sequence belongs to the polyribonucleotide nucleotidyltransferase family. It depends on Mg(2+) as a cofactor.

The protein localises to the cytoplasm. The enzyme catalyses RNA(n+1) + phosphate = RNA(n) + a ribonucleoside 5'-diphosphate. In terms of biological role, involved in mRNA degradation. Catalyzes the phosphorolysis of single-stranded polyribonucleotides processively in the 3'- to 5'-direction. The sequence is that of Polyribonucleotide nucleotidyltransferase from Rhizobium johnstonii (strain DSM 114642 / LMG 32736 / 3841) (Rhizobium leguminosarum bv. viciae).